Here is a 1050-residue protein sequence, read N- to C-terminus: ATP-dependent DNA helicase MPH1 (1050 aa).

The Helicase ATP-binding domain maps to 95 to 262 (IVQRAFYHNL…EIIDNLNISK (168 aa)). 108–115 (LPTGLGKT) is an ATP binding site. The DEAH box motif lies at 210 to 213 (DEAH). The Helicase C-terminal domain occupies 431 to 631 (KIEAMMEELD…LIDLKEQNRM (201 aa)). 2 disordered regions span residues 493 to 524 (DESNFGKKSKGKRVGKKQQDDSKSSSENAQIN) and 743 to 821 (DSDE…PPKR). Over residues 499–508 (KKSKGKRVGK) the composition is skewed to basic residues. Positions 786–799 (RTLDQHHSASEERG) are enriched in basic and acidic residues. Polar residues predominate over residues 800-810 (INSNFSHESNL).

The protein belongs to the DEAD box helicase family. DEAH subfamily. FANCM sub-subfamily. As to quaternary structure, interacts with the MHF histone-fold complex to form the FANCM-MHF complex.

The protein resides in the nucleus. It catalyses the reaction ATP + H2O = ADP + phosphate + H(+). ATP-dependent DNA helicase involved in DNA damage repair by homologous recombination and in genome maintenance. Capable of unwinding D-loops. Plays a role in limiting crossover recombinants during mitotic DNA double-strand break (DSB) repair. Component of a FANCM-MHF complex which promotes gene conversion at blocked replication forks, probably by reversal of the stalled fork. This chain is ATP-dependent DNA helicase MPH1, found in Scheffersomyces stipitis (strain ATCC 58785 / CBS 6054 / NBRC 10063 / NRRL Y-11545) (Yeast).